Reading from the N-terminus, the 317-residue chain is Malate dehydrogenase (317 aa).

Residues 10–15 and D34 each bind NAD(+); that span reads GGGQIG. Substrate-binding residues include R83 and R89. NAD(+) is bound by residues N96 and 119-121; that span reads ISN. Substrate is bound by residues N121 and R152. Residue H176 is the Proton acceptor of the active site.

Belongs to the LDH/MDH superfamily. MDH type 3 family.

It catalyses the reaction (S)-malate + NAD(+) = oxaloacetate + NADH + H(+). Its function is as follows. Catalyzes the reversible oxidation of malate to oxaloacetate. This chain is Malate dehydrogenase, found in Citrifermentans bemidjiense (strain ATCC BAA-1014 / DSM 16622 / JCM 12645 / Bem) (Geobacter bemidjiensis).